Reading from the N-terminus, the 455-residue chain is Ectonucleoside triphosphate diphosphohydrolase 6 (455 aa).

Residues 1–12 (MRKIPNHGTLRM) are Cytoplasmic-facing. Residues 13–32 (TKVAYPLGLCVGLFIYVAYI) form a helical; Signal-anchor for type II membrane protein membrane-spanning segment. The Lumenal portion of the chain corresponds to 33-455 (KWHRASAAQA…SLKRQKVPAL (423 aa)). A glycan (N-linked (GlcNAc...) asparagine) is linked at Asn-192. Residue Glu-196 is the Proton acceptor of the active site. Asn-256 carries N-linked (GlcNAc...) asparagine glycosylation. Cystine bridges form between Cys-297-Cys-327 and Cys-387-Cys-401.

Belongs to the GDA1/CD39 NTPase family. Ca(2+) is required as a cofactor. Mg(2+) serves as cofactor. Post-translationally, might be cleaved at the N-terminus, retained in an intracellular membrane compartment and in addition be released into the extracellular medium. In terms of processing, N-glycosylated. Expressed in heart and brain.

Its subcellular location is the golgi apparatus membrane. The protein resides in the secreted. It is found in the cell membrane. It carries out the reaction a ribonucleoside 5'-diphosphate + H2O = a ribonucleoside 5'-phosphate + phosphate + H(+). The enzyme catalyses IDP + H2O = IMP + phosphate + H(+). It catalyses the reaction GDP + H2O = GMP + phosphate + H(+). The catalysed reaction is UDP + H2O = UMP + phosphate + H(+). Its function is as follows. Catalyzes the hydrolysis of nucleoside triphosphates and diphosphates in a calcium- or magnesium-dependent manner. Has a strong preference for nucleoside diphosphates, preferentially hydrolyzes GDP, IDP, and UDP, with slower hydrolysis of CDP, ITP, GTP, CTP, ADP, and UTP and virtually no hydrolysis of ATP. The membrane bound form might support glycosylation reactions in the Golgi apparatus and, when released from cells, might catalyze the hydrolysis of extracellular nucleotides. This is Ectonucleoside triphosphate diphosphohydrolase 6 (Entpd6) from Rattus norvegicus (Rat).